The sequence spans 100 residues: Urease subunit gamma (100 aa).

It belongs to the urease gamma subunit family. As to quaternary structure, heterotrimer of UreA (gamma), UreB (beta) and UreC (alpha) subunits. Three heterotrimers associate to form the active enzyme.

The protein resides in the cytoplasm. The catalysed reaction is urea + 2 H2O + H(+) = hydrogencarbonate + 2 NH4(+). It functions in the pathway nitrogen metabolism; urea degradation; CO(2) and NH(3) from urea (urease route): step 1/1. The polypeptide is Urease subunit gamma (Verminephrobacter eiseniae (strain EF01-2)).